A 90-amino-acid polypeptide reads, in one-letter code: Cell division topological specificity factor (90 aa).

This sequence belongs to the MinE family.

Functionally, prevents the cell division inhibition by proteins MinC and MinD at internal division sites while permitting inhibition at polar sites. This ensures cell division at the proper site by restricting the formation of a division septum at the midpoint of the long axis of the cell. The protein is Cell division topological specificity factor of Brucella abortus (strain S19).